We begin with the raw amino-acid sequence, 467 residues long: Glycine--tRNA ligase (467 aa).

Residues Arg100 and Glu175 each coordinate substrate. ATP contacts are provided by residues 207–209, 217–222, 291–292, and 335–338; these read RNE, FRTREF, EL, and GADR. 222–226 serves as a coordination point for substrate; it reads FEQME. 331-335 contributes to the substrate binding site; it reads EPSLG.

It belongs to the class-II aminoacyl-tRNA synthetase family. Homodimer.

Its subcellular location is the cytoplasm. It catalyses the reaction tRNA(Gly) + glycine + ATP = glycyl-tRNA(Gly) + AMP + diphosphate. Functionally, catalyzes the attachment of glycine to tRNA(Gly). The chain is Glycine--tRNA ligase from Clostridium perfringens (strain 13 / Type A).